The chain runs to 217 residues: Probable GTP-binding protein EngB (217 aa).

Residues 37–214 enclose the EngB-type G domain; that stretch reads AGVEVAFAGR…RAAMARLIGE (178 aa). GTP-binding positions include 45 to 52, 72 to 76, 92 to 95, 159 to 162, and 193 to 195; these read GRSNVGKS, GRTQE, DMPG, TKAD, and TSS. Positions 52 and 74 each coordinate Mg(2+).

This sequence belongs to the TRAFAC class TrmE-Era-EngA-EngB-Septin-like GTPase superfamily. EngB GTPase family. Mg(2+) is required as a cofactor.

Necessary for normal cell division and for the maintenance of normal septation. The chain is Probable GTP-binding protein EngB from Nitrobacter hamburgensis (strain DSM 10229 / NCIMB 13809 / X14).